The chain runs to 316 residues: Ribose-phosphate pyrophosphokinase (316 aa).

Residues 40–42 (DGE) and 99–100 (RQ) each bind ATP. Residues His133 and Asp174 each contribute to the Mg(2+) site. The active site involves Lys197. Residues Arg199, Asp223, and 227–231 (DTAGT) contribute to the D-ribose 5-phosphate site.

Belongs to the ribose-phosphate pyrophosphokinase family. Class I subfamily. Homohexamer. Requires Mg(2+) as cofactor.

The protein localises to the cytoplasm. It catalyses the reaction D-ribose 5-phosphate + ATP = 5-phospho-alpha-D-ribose 1-diphosphate + AMP + H(+). Its pathway is metabolic intermediate biosynthesis; 5-phospho-alpha-D-ribose 1-diphosphate biosynthesis; 5-phospho-alpha-D-ribose 1-diphosphate from D-ribose 5-phosphate (route I): step 1/1. Its function is as follows. Involved in the biosynthesis of the central metabolite phospho-alpha-D-ribosyl-1-pyrophosphate (PRPP) via the transfer of pyrophosphoryl group from ATP to 1-hydroxyl of ribose-5-phosphate (Rib-5-P). In Fusobacterium nucleatum subsp. nucleatum (strain ATCC 25586 / DSM 15643 / BCRC 10681 / CIP 101130 / JCM 8532 / KCTC 2640 / LMG 13131 / VPI 4355), this protein is Ribose-phosphate pyrophosphokinase.